We begin with the raw amino-acid sequence, 339 residues long: Photosystem II assembly lipoprotein Ycf48 (339 aa).

The N-terminal stretch at 1–23 (MNRLIKFSFNLILIFVLGLGLSG) is a signal peptide. Cys24 carries the N-palmitoyl cysteine lipid modification. Cys24 is lipidated: S-diacylglycerol cysteine.

The protein belongs to the Ycf48 family. As to quaternary structure, part of early PSII assembly complexes which includes D1 (psbA) and PsbI; not found in mature PSII. Binds to the lumenal side of PSII complexes. Interacts with YidC.

It localises to the cellular thylakoid membrane. A factor required for optimal assembly of photosystem II (PSII), acting in the early stages of PSII assembly. Also plays a role in replacement of photodamaged D1 (psbA). Assists YidC in synthesis of chlorophyll-binding proteins. This is Photosystem II assembly lipoprotein Ycf48 from Prochlorococcus marinus (strain SARG / CCMP1375 / SS120).